Consider the following 45-residue polypeptide: Photosystem II reaction center protein K (45 aa).

Residues 1 to 8 constitute a propeptide that is removed on maturation; sequence MELAMLLA. A helical transmembrane segment spans residues 24-44; the sequence is LPVIPVFFLLLAFVWQAAVGF.

It belongs to the PsbK family. In terms of assembly, PSII is composed of 1 copy each of membrane proteins PsbA, PsbB, PsbC, PsbD, PsbE, PsbF, PsbH, PsbI, PsbJ, PsbK, PsbL, PsbM, PsbT, PsbX, PsbY, PsbZ, Psb30/Ycf12, peripheral proteins PsbO, CyanoQ (PsbQ), PsbU, PsbV and a large number of cofactors. It forms dimeric complexes.

Its subcellular location is the cellular thylakoid membrane. Functionally, one of the components of the core complex of photosystem II (PSII). PSII is a light-driven water:plastoquinone oxidoreductase that uses light energy to abstract electrons from H(2)O, generating O(2) and a proton gradient subsequently used for ATP formation. It consists of a core antenna complex that captures photons, and an electron transfer chain that converts photonic excitation into a charge separation. This Trichodesmium erythraeum (strain IMS101) protein is Photosystem II reaction center protein K.